Consider the following 409-residue polypeptide: Glycinol 4-dimethylallyltransferase (409 aa).

A chloroplast-targeting transit peptide spans 1–44; it reads MDWGLAISSHPKPYSVTTGGNLWRSKHTTKNIYFASSWISKASR. Transmembrane regions (helical) follow at residues 113–133, 148–168, 200–220, 222–242, 249–269, 287–307, 330–350, 354–374, and 388–408; these read LSAFYWFSYPYTMIGITLCAF, LSFLIGVLQGVLPQLFIEIYL, VIISAAFLALSFGFTWITGSW, LICNLVVIASSWTAYSIDVPL, PFVAAMCMISTWALALPISYF, LGFLVAFMTFYSLGLALSKDI, AFWICVSFFEMAFGVGILAGA, HFWTKIFTGMGNAVLASILWY, and GSFYMFIWKLLYAGFFLMALI.

It belongs to the UbiA prenyltransferase family. The cofactor is Mg(2+). It depends on Mn(2+) as a cofactor. Co(2+) is required as a cofactor.

It localises to the plastid. It is found in the chloroplast membrane. The enzyme catalyses (6aS,11aS)-3,6a,9-trihydroxypterocarpan + dimethylallyl diphosphate = (6aS,11aS)-2-dimethylallyl-3,6a,9-trihydroxypterocarpan + diphosphate. The catalysed reaction is (6aS,11aS)-3,6a,9-trihydroxypterocarpan + dimethylallyl diphosphate = (6aS,11aS)-4-dimethylallyl-3,6a,9-trihydroxypterocarpan + diphosphate. The protein operates within phytoalexin biosynthesis; pterocarpan phytoalexin biosynthesis. Proposed to be involved in the biosynthesis of pterocarpan phytoalexins, specifically glyceollins. Can act as a prenyltransferase towards glycinol which is the direct precursor of glyceollins. Seems to be specific for prenylation at C-4 thus producing glyceollin I. In Glycine max (Soybean), this protein is Glycinol 4-dimethylallyltransferase (G4DT).